The primary structure comprises 121 residues: Large ribosomal subunit protein bL21 (121 aa).

The protein belongs to the bacterial ribosomal protein bL21 family. As to quaternary structure, part of the 50S ribosomal subunit. Contacts protein L20.

Its function is as follows. This protein binds to 23S rRNA in the presence of protein L20. This chain is Large ribosomal subunit protein bL21, found in Gloeobacter violaceus (strain ATCC 29082 / PCC 7421).